The chain runs to 346 residues: Aldose 1-epimerase (346 aa).

Arginine 79 is a binding site for substrate. The active-site Proton donor is the histidine 175. Substrate is bound at residue aspartate 245. Glutamate 309 functions as the Proton acceptor in the catalytic mechanism.

It belongs to the aldose epimerase family.

Its subcellular location is the cytoplasm. It carries out the reaction alpha-D-glucose = beta-D-glucose. The protein operates within carbohydrate metabolism; hexose metabolism. In terms of biological role, mutarotase converts alpha-aldose to the beta-anomer. It is active on D-glucose, L-arabinose, D-xylose, D-galactose, maltose and lactose. This is Aldose 1-epimerase (galM) from Escherichia coli (strain K12).